The following is a 106-amino-acid chain: Large ribosomal subunit protein uL24 (106 aa).

Residues 84 to 97 are compositionally biased toward basic and acidic residues; the sequence is EKIGRELGAKEKAR. Residues 84–106 are disordered; it reads EKIGRELGAKEKARLQKRKAAAK.

This sequence belongs to the universal ribosomal protein uL24 family. As to quaternary structure, part of the 50S ribosomal subunit.

In terms of biological role, one of two assembly initiator proteins, it binds directly to the 5'-end of the 23S rRNA, where it nucleates assembly of the 50S subunit. Its function is as follows. One of the proteins that surrounds the polypeptide exit tunnel on the outside of the subunit. The polypeptide is Large ribosomal subunit protein uL24 (Anaeromyxobacter sp. (strain K)).